The primary structure comprises 433 residues: Adenylosuccinate synthetase (433 aa).

Residues 13–19 (GDEGKGK) and 41–43 (GHT) contribute to the GTP site. The active-site Proton acceptor is aspartate 14. The Mg(2+) site is built by aspartate 14 and glycine 41. Residues 14–17 (DEGK), 39–42 (NAGH), threonine 130, arginine 144, glutamine 225, threonine 240, and arginine 304 each bind IMP. The active-site Proton donor is histidine 42. 300-306 (STTGRKR) provides a ligand contact to substrate. Residues arginine 306, 332-334 (KLD), and 414-416 (STG) contribute to the GTP site.

The protein belongs to the adenylosuccinate synthetase family. Homodimer. The cofactor is Mg(2+).

The protein resides in the cytoplasm. It carries out the reaction IMP + L-aspartate + GTP = N(6)-(1,2-dicarboxyethyl)-AMP + GDP + phosphate + 2 H(+). Its pathway is purine metabolism; AMP biosynthesis via de novo pathway; AMP from IMP: step 1/2. Functionally, plays an important role in the de novo pathway of purine nucleotide biosynthesis. Catalyzes the first committed step in the biosynthesis of AMP from IMP. The polypeptide is Adenylosuccinate synthetase (Buchnera aphidicola subsp. Acyrthosiphon pisum (strain APS) (Acyrthosiphon pisum symbiotic bacterium)).